A 648-amino-acid polypeptide reads, in one-letter code: Putative potassium transport protein DDB_G0292412 (648 aa).

A helical transmembrane segment spans residues 48–68; it reads LFLLVILVQLGSTVLLTLPIV. N81 is a glycosylation site (N-linked (GlcNAc...) asparagine). 2 disordered regions span residues 106–145 and 223–261; these read HDFK…DDND and QQQQ…DSQS. Residues 110 to 129 show a composition bias toward acidic residues; the sequence is DDDDENDNNNNEENDDNDDE. Positions 199–227 form a coiled coil; that stretch reads IIQQQQQQQQQQQQQQQQQQQQQQQQQQQ. 6 N-linked (GlcNAc...) asparagine glycosylation sites follow: N239, N243, N247, N248, N254, and N257. Helical transmembrane passes span 313–333, 353–373, 385–405, 443–463, 472–491, and 505–525; these read LLVI…ISIG, GWWW…LALF, FLLI…PVFL, VQLF…MALL, NMNY…STRT, and SVLL…IISL. N-linked (GlcNAc...) asparagine glycosylation occurs at N536. Helical transmembrane passes span 550 to 570, 571 to 591, and 592 to 612; these read IFVP…LLES, GVIT…NVGL, and SISI…MLAG.

This sequence belongs to the TrkH potassium transport family.

It is found in the membrane. May function as a potassium transporter. In Dictyostelium discoideum (Social amoeba), this protein is Putative potassium transport protein DDB_G0292412.